The primary structure comprises 362 residues: Sphingosine 1-phosphate receptor 1 (362 aa).

The Extracellular segment spans residues 1 to 25 (MDDLIARHYNFTGKFRKVHKDPGLK). A glycan (N-linked (GlcNAc...) asparagine) is linked at N10. Residues 26-47 (ADSVVFIIVCCFIILENVLVLL) traverse the membrane as a helical segment. The Cytoplasmic portion of the chain corresponds to 48–61 (TIWRTKKFHKPMYY). The helical transmembrane segment at 62–83 (FIGNLALSDLLAGVVYTANILL) threads the bilayer. Residues 84-95 (SGANTYKLTPTQ) are Extracellular-facing. A helical transmembrane segment spans residues 96–117 (WFFREGSMFVALAASVFSLLAI). Sphing-4-enine 1-phosphate is bound at residue 99-100 (RE). The Cytoplasmic segment spans residues 118–139 (AIERHLTMLKMKLHNNGKTCRV). A helical membrane pass occupies residues 140-161 (FMLISTVWFIAAILGGLPVMGW). Residues 162–175 (NCIDSMNNCSTVLP) lie on the Extracellular side of the membrane. An intrachain disulfide couples C163 to C170. The N-linked (GlcNAc...) asparagine glycan is linked to N169. A helical membrane pass occupies residues 176–203 (LYHKAYILFCTTVFSVILMAIVILYARI). Topologically, residues 204-238 (YALVRTRSRKLVFRKVANGRGSNKSSEKSMALLKT) are cytoplasmic. Residues 239–259 (VIIVLSCFIACWAPLFILLLL) traverse the membrane as a helical segment. 246-250 (FIACW) is a sphing-4-enine 1-phosphate binding site. Residues 260 to 270 (DVACQTLTCSI) lie on the Extracellular side of the membrane. An intrachain disulfide couples C263 to C268. A helical transmembrane segment spans residues 271-291 (LYKAEWFLALAVLNSAMNPLI). Residues 292–362 (YTLTSNEMRR…VSSGNITSSS (71 aa)) are Cytoplasmic-facing. The S-palmitoyl cysteine moiety is linked to residue C309. The interval 328 to 362 (FSRSKSDNSSHPNKDEPEYSPRETIVSSGNITSSS) is disordered. A compositionally biased stretch (basic and acidic residues) spans 329-348 (SRSKSDNSSHPNKDEPEYSP). Residues 352–362 (IVSSGNITSSS) show a composition bias toward polar residues.

The protein belongs to the G-protein coupled receptor 1 family.

Its subcellular location is the cell membrane. Functionally, G-protein coupled receptor for the bioactive lysosphingolipid sphingosine 1-phosphate (S1P) that seems to be coupled to the G(i) subclass of heteromeric G proteins. Signaling leads to the activation of RAC1, SRC, PTK2/FAK1 and MAP kinases. Plays an important role in cell migration, probably via its role in the reorganization of the actin cytoskeleton and the formation of lamellipodia in response to stimuli that increase the activity of the sphingosine kinase SPHK1. Required for normal chemotaxis toward sphingosine 1-phosphate. The sequence is that of Sphingosine 1-phosphate receptor 1 (s1pr1) from Danio rerio (Zebrafish).